The sequence spans 403 residues: uncharacterized protein (403 aa).

This is an uncharacterized protein from Aquifex aeolicus (strain VF5).